We begin with the raw amino-acid sequence, 210 residues long: Transcriptional regulator GfcR (210 aa).

The tract at residues Val39–Ile60 is disordered. Residues Pro48 to Ile60 show a composition bias toward basic and acidic residues.

The protein belongs to the purine/pyrimidine phosphoribosyltransferase family. GfcR subfamily.

With respect to regulation, interaction with effectors modulates GfcR activity. 2-keto-3-deoxy-6-phosphogluconate (KDPG), fructose-1,6-bisphosphate (FBP), 2-keto-3-deoxy-6-phosphogalactonate (KDPGal) and glycerol-3-phosphate (G3P), which are intermediates of sugar and glycerol degradation pathways, can act as inducer molecules. In terms of biological role, DNA-binding transcriptional regulator that functions as a regulator of central sugar catabolic pathways. Is both a local regulator of specific steps in the pathways for D-glucose and D-fructose degradation and a global regulator of hexose catabolism. In the presence of D-glucose, activates expression of the gene encoding the gluconate dehydratase (gad), which is involved in D-glucose catabolism via the semiphosphorylative Entner-Doudoroff (spED) pathway. In the presence of D-fructose, activates expression of the genes encoding the PTS system EIIC component (ptfC) and the fructose-1,6-bisphosphate aldolase (fba), which are involved in D-fructose uptake and degradation via the modified Embden-Meyerhof pathway. In addition, in the presence of D-glucose, D-fructose, D-galactose or glycerol, it activates expression of the genes encoding glyceraldehyde-3-phosphate dehydrogenase (gap) and pyruvate kinase (pykA), enzymes common to all four degradation pathways. Acts by binding directly to the promoter region of the regulated genes. The polypeptide is Transcriptional regulator GfcR (Haloferax volcanii (strain ATCC 29605 / DSM 3757 / JCM 8879 / NBRC 14742 / NCIMB 2012 / VKM B-1768 / DS2) (Halobacterium volcanii)).